Reading from the N-terminus, the 559-residue chain is Poly(U)-binding-splicing factor PUF60 (559 aa).

Positions 1-516 are inhibits homodimerization; the sequence is MATATIALQV…EDAEIIVKIF (516 aa). Residues glutamine 14 and lysine 43 each participate in a glycyl lysine isopeptide (Lys-Gly) (interchain with G-Cter in SUMO2) cross-link. Threonine 60 is subject to Phosphothreonine. The inhibits transcriptional repression, interaction with ERCC3 and apoptosis induction stretch occupies residues 77–559; sequence QSIKSVLVKQ…ERFDNSDLSA (483 aa). Lysine 80 is covalently cross-linked (Glycyl lysine isopeptide (Lys-Gly) (interchain with G-Cter in SUMO2)). Serine 112 is subject to Phosphoserine. 2 RRM domains span residues 129–207 and 226–304; these read CRVY…RPSN and NRIY…KAVT. Serine 244 carries the phosphoserine modification. Residue lysine 251 is modified to N6-acetyllysine. Threonine 314 carries the phosphothreonine modification. The segment at 416 to 437 is disordered; that stretch reads KKEKEEEELFPESERPEMLSEQ. A Glycyl lysine isopeptide (Lys-Gly) (interchain with G-Cter in SUMO2) cross-link involves residue lysine 419. The segment covering 427-437 has biased composition (basic and acidic residues); sequence ESERPEMLSEQ. Position 454 is an N6-acetyllysine (lysine 454). Lysine 458 is covalently cross-linked (Glycyl lysine isopeptide (Lys-Gly) (interchain with G-Cter in SUMO2)). The region spanning 462-549 is the RRM 3; atypical domain; sequence TVMVLRNMVD…RKVVAEVYDQ (88 aa).

Belongs to the RRM half pint family. As to quaternary structure, homodimer. Associates with the spliceosome. Found in a complex with RO60 and Y5 RNA. Found in a complex with FUBP1 and far upstream element (FUSE) DNA segment. Interacts directly with ERCC3. Interacts with CDK7 and GTF2H1. Interacts with SRSF11/P54. Does not interact with ERCC3 in xeroderma pigmentosum complementation group B (XPB) cells. Interacts with ARGLU1; interaction may be involved in ARGLU1-mediated modulation of alternative splicing. As to expression, isoform 2 is expressed in colonic epithelium and colorectal epithelium cancer (at protein level). Isoform 6 is expressed in colorectal epithelial cancer but below detection level in colonic epithelium. Expressed in heart, brain, placenta, lung, liver, skeletal muscle, kidney, pancreas, spleen, thymus, prostate, testis, ovary, small intestine, colon and peripheral blood leukocytes.

The protein resides in the nucleus. DNA- and RNA-binding protein, involved in several nuclear processes such as pre-mRNA splicing, apoptosis and transcription regulation. In association with FUBP1 regulates MYC transcription at the P2 promoter through the core-TFIIH basal transcription factor. Acts as a transcriptional repressor through the core-TFIIH basal transcription factor. Represses FUBP1-induced transcriptional activation but not basal transcription. Decreases ERCC3 helicase activity. Does not repress TFIIH-mediated transcription in xeroderma pigmentosum complementation group B (XPB) cells. Is also involved in pre-mRNA splicing. Promotes splicing of an intron with weak 3'-splice site and pyrimidine tract in a cooperative manner with U2AF2. Involved in apoptosis induction when overexpressed in HeLa cells. Isoform 6 failed to repress MYC transcription and inhibited FIR-induced apoptosis in colorectal cancer. Isoform 6 may contribute to tumor progression by enabling increased MYC expression and greater resistance to apoptosis in tumors than in normal cells. Modulates alternative splicing of several mRNAs. Binds to relaxed DNA of active promoter regions. Binds to the pyrimidine tract and 3'-splice site regions of pre-mRNA; binding is enhanced in presence of U2AF2. Binds to Y5 RNA in association with RO60. Binds to poly(U) RNA. The polypeptide is Poly(U)-binding-splicing factor PUF60 (Homo sapiens (Human)).